A 162-amino-acid chain; its full sequence is uncharacterized protein (162 aa).

The next 4 helical transmembrane spans lie at 10-30 (ILSFTYLALVLCLVMPFMLIL), 50-70 (IVELIVLSIFAGFITSFALYN), 96-116 (IAQYEVMVSIFYSLLLLIILL), and 125-145 (FTAIFQIFFTFCAIFVPLFIF).

It localises to the cell membrane. This is an uncharacterized protein from Methanocaldococcus jannaschii (strain ATCC 43067 / DSM 2661 / JAL-1 / JCM 10045 / NBRC 100440) (Methanococcus jannaschii).